A 322-amino-acid polypeptide reads, in one-letter code: Mitochondrial uncoupling protein 4 (322 aa).

Solcar repeat units lie at residues 20 to 114, 124 to 216, and 225 to 316; these read SKFL…LREV, YPLW…VKHY, and DNIS…IREM. A run of 6 helical transmembrane segments spans residues 22-39, 87-108, 126-143, 194-211, 228-247, and 287-310; these read FLLS…TFPL, WQGV…MVTY, LWKS…GQFL, PNIQ…TTYD, STHG…LGTP, and SLYK…WLTY.

Belongs to the mitochondrial carrier (TC 2.A.29) family. As to quaternary structure, homotetramer.

Its subcellular location is the mitochondrion inner membrane. It localises to the cell projection. The protein resides in the neuron projection. It catalyses the reaction H(+)(in) = H(+)(out). It carries out the reaction chloride(in) = chloride(out). Facilitates proton transport across the inner mitochondrial membrane and may dissipate excessive proton gradient associated with oxidative and metabolic stress at neuronal synapses. Regulates glutamate-induced proton conductance in astrocytes, shifting the energy metabolism toward aerobic glycolysis and lactate transfer to neurons for ATP synthesis. Can transport chloride ions with lower efficiency. The transport mechanism remains to be elucidated. This chain is Mitochondrial uncoupling protein 4, found in Mus musculus (Mouse).